Consider the following 184-residue polypeptide: Photosystem I assembly protein Ycf4 (184 aa).

A run of 2 helical transmembrane segments spans residues Phe22–Ser42 and Ile57–Ser77.

This sequence belongs to the Ycf4 family.

It localises to the plastid. It is found in the chloroplast thylakoid membrane. Its function is as follows. Seems to be required for the assembly of the photosystem I complex. In Acorus calamus (Sweet flag), this protein is Photosystem I assembly protein Ycf4.